A 246-amino-acid polypeptide reads, in one-letter code: Dihydroorotate dehydrogenase B (NAD(+)), electron transfer subunit (246 aa).

Positions 3–95 (MEYFKGKVKE…IGPLGNGFDI (93 aa)) constitute an FAD-binding FR-type domain. FAD-binding positions include 48–51 (RPIS) and 70–71 (GT). Residues cysteine 213, cysteine 218, cysteine 221, and cysteine 233 each coordinate [2Fe-2S] cluster.

This sequence belongs to the PyrK family. As to quaternary structure, heterotetramer of 2 PyrK and 2 PyrD type B subunits. The cofactor is [2Fe-2S] cluster. FAD is required as a cofactor.

The protein operates within pyrimidine metabolism; UMP biosynthesis via de novo pathway; orotate from (S)-dihydroorotate (NAD(+) route): step 1/1. In terms of biological role, responsible for channeling the electrons from the oxidation of dihydroorotate from the FMN redox center in the PyrD type B subunit to the ultimate electron acceptor NAD(+). The protein is Dihydroorotate dehydrogenase B (NAD(+)), electron transfer subunit of Clostridium perfringens (strain 13 / Type A).